Here is a 225-residue protein sequence, read N- to C-terminus: Uracil-DNA glycosylase (225 aa).

D68 (proton acceptor) is an active-site residue.

It belongs to the uracil-DNA glycosylase (UDG) superfamily. UNG family.

It localises to the cytoplasm. It catalyses the reaction Hydrolyzes single-stranded DNA or mismatched double-stranded DNA and polynucleotides, releasing free uracil.. Excises uracil residues from the DNA which can arise as a result of misincorporation of dUMP residues by DNA polymerase or due to deamination of cytosine. This Mycolicibacterium vanbaalenii (strain DSM 7251 / JCM 13017 / BCRC 16820 / KCTC 9966 / NRRL B-24157 / PYR-1) (Mycobacterium vanbaalenii) protein is Uracil-DNA glycosylase.